Here is a 156-residue protein sequence, read N- to C-terminus: SsrA-binding protein (156 aa).

The protein belongs to the SmpB family.

It is found in the cytoplasm. Its function is as follows. Required for rescue of stalled ribosomes mediated by trans-translation. Binds to transfer-messenger RNA (tmRNA), required for stable association of tmRNA with ribosomes. tmRNA and SmpB together mimic tRNA shape, replacing the anticodon stem-loop with SmpB. tmRNA is encoded by the ssrA gene; the 2 termini fold to resemble tRNA(Ala) and it encodes a 'tag peptide', a short internal open reading frame. During trans-translation Ala-aminoacylated tmRNA acts like a tRNA, entering the A-site of stalled ribosomes, displacing the stalled mRNA. The ribosome then switches to translate the ORF on the tmRNA; the nascent peptide is terminated with the 'tag peptide' encoded by the tmRNA and targeted for degradation. The ribosome is freed to recommence translation, which seems to be the essential function of trans-translation. This Bacillus velezensis (strain DSM 23117 / BGSC 10A6 / LMG 26770 / FZB42) (Bacillus amyloliquefaciens subsp. plantarum) protein is SsrA-binding protein.